Consider the following 304-residue polypeptide: Glutaminase (304 aa).

Substrate contacts are provided by S63, N113, E157, N164, Y188, Y240, and V258.

This sequence belongs to the glutaminase family. In terms of assembly, homotetramer.

It carries out the reaction L-glutamine + H2O = L-glutamate + NH4(+). This is Glutaminase from Paraburkholderia phytofirmans (strain DSM 17436 / LMG 22146 / PsJN) (Burkholderia phytofirmans).